The sequence spans 210 residues: MISYLKGNPIETLKNTQNRILLILEVNQVGYEMQIPSRFARELSQNPRETLQVFTHLQVKDEQPILYGFATAAERELFRQLVSVSGIGAQLAIALIDTLGLEELVQAIVNGNIRTLSQTPGVGQKTAERIALELKTKLSQWRKLVGITLPSTSAIPSLEVLEDVEMTLLALGYTNEEINKAISTLSQDNQMLKNTNSEEWIREAIAWLSQ.

The tract at residues 1–70 is domain I; that stretch reads MISYLKGNPI…DEQPILYGFA (70 aa). The domain II stretch occupies residues 71–149; it reads TAAERELFRQ…QWRKLVGITL (79 aa). The flexible linker stretch occupies residues 150–160; it reads PSTSAIPSLEV. Residues 160-210 form a domain III region; it reads VLEDVEMTLLALGYTNEEINKAISTLSQDNQMLKNTNSEEWIREAIAWLSQ.

Belongs to the RuvA family. In terms of assembly, homotetramer. Forms an RuvA(8)-RuvB(12)-Holliday junction (HJ) complex. HJ DNA is sandwiched between 2 RuvA tetramers; dsDNA enters through RuvA and exits via RuvB. An RuvB hexamer assembles on each DNA strand where it exits the tetramer. Each RuvB hexamer is contacted by two RuvA subunits (via domain III) on 2 adjacent RuvB subunits; this complex drives branch migration. In the full resolvosome a probable DNA-RuvA(4)-RuvB(12)-RuvC(2) complex forms which resolves the HJ.

The protein resides in the cytoplasm. Its function is as follows. The RuvA-RuvB-RuvC complex processes Holliday junction (HJ) DNA during genetic recombination and DNA repair, while the RuvA-RuvB complex plays an important role in the rescue of blocked DNA replication forks via replication fork reversal (RFR). RuvA specifically binds to HJ cruciform DNA, conferring on it an open structure. The RuvB hexamer acts as an ATP-dependent pump, pulling dsDNA into and through the RuvAB complex. HJ branch migration allows RuvC to scan DNA until it finds its consensus sequence, where it cleaves and resolves the cruciform DNA. In Rippkaea orientalis (strain PCC 8801 / RF-1) (Cyanothece sp. (strain PCC 8801)), this protein is Holliday junction branch migration complex subunit RuvA.